The sequence spans 614 residues: BTB/POZ domain-containing protein At5g48800 (614 aa).

The 69-residue stretch at 43-111 folds into the BTB domain; it reads SDITIEVNGG…CYGINFEITS (69 aa). The NPH3 domain occupies 219-484; sequence DWWIEDLSVL…VQVLYFEQLK (266 aa). Tyrosine 425 is subject to Phosphotyrosine. Disordered regions lie at residues 492-525 and 583-614; these read SYSD…KDNY and GHSS…ASTD. Positions 507 to 521 are enriched in polar residues; it reads SWRINSGALSATMSP. The stretch at 522 to 562 forms a coiled coil; sequence KDNYASLRRENRELKLELARLRMRLNDLEKEHICMKRDMQR. Low complexity predominate over residues 583 to 597; it reads GHSSSRGSSSPSKQS.

This sequence belongs to the NPH3 family.

The protein operates within protein modification; protein ubiquitination. In terms of biological role, may act as a substrate-specific adapter of an E3 ubiquitin-protein ligase complex (CUL3-RBX1-BTB) which mediates the ubiquitination and subsequent proteasomal degradation of target proteins. This Arabidopsis thaliana (Mouse-ear cress) protein is BTB/POZ domain-containing protein At5g48800.